A 444-amino-acid chain; its full sequence is Magnesium transporter MRS2-F (444 aa).

The segment at 128 to 155 is disordered; sequence FTDMEGESSAVTSPFPALTSTTPNELEM. The span at 145 to 155 shows a compositional bias: polar residues; that stretch reads LTSTTPNELEM. Positions 195 to 258 form a coiled coil; it reads VCLESACRSL…QKVRDELEHL (64 aa). A helical membrane pass occupies residues 370 to 390; sequence GVMLSTATVVITAGVAVVGLF. Residues 391–393 carry the Required for magnesium transport activity motif; sequence GMN. A helical membrane pass occupies residues 415 to 435; sequence FWETTLGTIAGCTVMYIVAMG.

The protein belongs to the CorA metal ion transporter (MIT) (TC 1.A.35.5) family.

It is found in the membrane. Magnesium transporter that may mediate the influx of magnesium. The sequence is that of Magnesium transporter MRS2-F (MRS2-F) from Oryza sativa subsp. indica (Rice).